The following is a 436-amino-acid chain: Ribosomal protein uS12 methylthiotransferase RimO (436 aa).

Residues 2–117 enclose the MTTase N-terminal domain; it reads KNVGIISLGC…IAEVIEKIEK (116 aa). Residues Cys11, Cys47, Cys80, Cys154, Cys158, and Cys161 each coordinate [4Fe-4S] cluster. Residues 140 to 369 enclose the Radical SAM core domain; the sequence is TTPNYYAYLK…MEIQKEISYQ (230 aa). One can recognise a TRAM domain in the interval 372 to 436; it reads LSKVGKQLEV…AYEYDLVGEY (65 aa).

It belongs to the methylthiotransferase family. RimO subfamily. It depends on [4Fe-4S] cluster as a cofactor.

The protein resides in the cytoplasm. The enzyme catalyses L-aspartate(89)-[ribosomal protein uS12]-hydrogen + (sulfur carrier)-SH + AH2 + 2 S-adenosyl-L-methionine = 3-methylsulfanyl-L-aspartate(89)-[ribosomal protein uS12]-hydrogen + (sulfur carrier)-H + 5'-deoxyadenosine + L-methionine + A + S-adenosyl-L-homocysteine + 2 H(+). In terms of biological role, catalyzes the methylthiolation of an aspartic acid residue of ribosomal protein uS12. In Thermoanaerobacter sp. (strain X514), this protein is Ribosomal protein uS12 methylthiotransferase RimO.